The primary structure comprises 262 residues: Ribose-5-phosphate isomerase A (262 aa).

Residues 33–36 (TGST), 89–92 (DGAD), and 102–105 (KGGG) contribute to the substrate site. Glu-111 serves as the catalytic Proton acceptor. Lys-129 lines the substrate pocket.

This sequence belongs to the ribose 5-phosphate isomerase family. In terms of assembly, homodimer.

It catalyses the reaction aldehydo-D-ribose 5-phosphate = D-ribulose 5-phosphate. It participates in carbohydrate degradation; pentose phosphate pathway; D-ribose 5-phosphate from D-ribulose 5-phosphate (non-oxidative stage): step 1/1. Catalyzes the reversible conversion of ribose-5-phosphate to ribulose 5-phosphate. The sequence is that of Ribose-5-phosphate isomerase A from Cereibacter sphaeroides (strain ATCC 17029 / ATH 2.4.9) (Rhodobacter sphaeroides).